The primary structure comprises 406 residues: MKRSIILVLDSFGIGATEDAVDFGDVGSNTMGHIAQACARGEADNGDRSGPLHLPNLNKLGLGKACEESSGYFPEGLDPNVEITGAYGHAKELSSGKDTPSGHWEIAGVPVLFDWGYFSDHDNSFPKELTDRILKRANLPGFLGNCHASGTHVLDELGEEHMKTGMPIFYTSADSVFQIACHEETFGLDNLLTLCQIAREELEDYNIGRVIARPFTGPGKGQFERTGNRRDLSLEPPATTVLQKLVDEKGGDVISIGKISDIYAGCGITKKVKANGIPALFEATLEQIKQAGDNSLVFTNFVDFDSAYGHRRNVAGYAAALEYFDKRLPEVLELLQEDDVLILTADHGCDPTWEGTDHTREHIPVIVTGPKIPAGSLGRRETFADIGQSLAEYYGTSDMEYGKSFL.

Mn(2+)-binding residues include Asp-10, Asp-305, His-310, Asp-346, His-347, and His-358.

The protein belongs to the phosphopentomutase family. Mn(2+) serves as cofactor.

It localises to the cytoplasm. The catalysed reaction is 2-deoxy-alpha-D-ribose 1-phosphate = 2-deoxy-D-ribose 5-phosphate. It catalyses the reaction alpha-D-ribose 1-phosphate = D-ribose 5-phosphate. It functions in the pathway carbohydrate degradation; 2-deoxy-D-ribose 1-phosphate degradation; D-glyceraldehyde 3-phosphate and acetaldehyde from 2-deoxy-alpha-D-ribose 1-phosphate: step 1/2. Isomerase that catalyzes the conversion of deoxy-ribose 1-phosphate (dRib-1-P) and ribose 1-phosphate (Rib-1-P) to deoxy-ribose 5-phosphate (dRib-5-P) and ribose 5-phosphate (Rib-5-P), respectively. This is Phosphopentomutase from Photobacterium profundum (strain SS9).